A 179-amino-acid polypeptide reads, in one-letter code: Acireductone dioxygenase (179 aa).

Residues 1–12 (MVEAWYMDDSEE) show a composition bias toward acidic residues. Residues 1-21 (MVEAWYMDDSEEDQRRPHRLE) are disordered. Residues His-88, His-90, Glu-94, and His-133 each coordinate Fe(2+). Ni(2+)-binding residues include His-88, His-90, Glu-94, and His-133.

Belongs to the acireductone dioxygenase (ARD) family. Monomer. Interacts with MMP14. Fe(2+) is required as a cofactor. Requires Ni(2+) as cofactor.

It localises to the cytoplasm. The protein resides in the nucleus. Its subcellular location is the cell membrane. It carries out the reaction 1,2-dihydroxy-5-(methylsulfanyl)pent-1-en-3-one + O2 = 4-methylsulfanyl-2-oxobutanoate + formate + 2 H(+). The enzyme catalyses 1,2-dihydroxy-5-(methylsulfanyl)pent-1-en-3-one + O2 = 3-(methylsulfanyl)propanoate + CO + formate + 2 H(+). It functions in the pathway amino-acid biosynthesis; L-methionine biosynthesis via salvage pathway; L-methionine from S-methyl-5-thio-alpha-D-ribose 1-phosphate: step 5/6. Catalyzes 2 different reactions between oxygen and the acireductone 1,2-dihydroxy-3-keto-5-methylthiopentene (DHK-MTPene) depending upon the metal bound in the active site. Fe-containing acireductone dioxygenase (Fe-ARD) produces formate and 2-keto-4-methylthiobutyrate (KMTB), the alpha-ketoacid precursor of methionine in the methionine recycle pathway. Ni-containing acireductone dioxygenase (Ni-ARD) produces methylthiopropionate, carbon monoxide and formate, and does not lie on the methionine recycle pathway. Also down-regulates cell migration mediated by MMP14. The chain is Acireductone dioxygenase from Monodelphis domestica (Gray short-tailed opossum).